A 297-amino-acid chain; its full sequence is Salivary glue protein Sgs-4 (297 aa).

Positions methionine 1–serine 21 are cleaved as a signal peptide. 21 repeat units span residues threonine 26–glutamate 32, threonine 33–glutamate 39, threonine 40–glutamate 46, threonine 47–glutamate 53, threonine 54–glutamate 60, threonine 61–glutamate 67, threonine 68–arginine 74, threonine 75–lysine 81, threonine 82–arginine 88, threonine 89–lysine 95, threonine 96–arginine 102, threonine 103–arginine 109, threonine 110–lysine 116, threonine 117–lysine 123, threonine 124–lysine 130, threonine 131–arginine 137, threonine 138–lysine 144, threonine 145–arginine 151, threonine 152–lysine 158, threonine 159–lysine 165, and threonine 166–lysine 172. A disordered region spans residues threonine 26–proline 84. Residues threonine 26–lysine 179 form a 22 X 7 AA approximate tandem repeats of T-[ETK]-[PT]-P-[RKT]-C-[ERK] region. The span at glutamate 27 to arginine 58 shows a compositional bias: basic and acidic residues. Low complexity predominate over residues cysteine 59 to proline 84. The segment covering proline 141–glutamate 174 has biased composition (low complexity). Disordered stretches follow at residues proline 141 to glycine 218 and proline 243 to cysteine 297. One copy of the 22; approximate repeat lies at threonine 173 to lysine 179. 2 stretches are compositionally biased toward basic residues: residues cysteine 181 to arginine 208 and asparagine 282 to glutamine 291.

As to expression, salivary gland.

Its subcellular location is the secreted. This chain is Salivary glue protein Sgs-4 (Sgs4), found in Drosophila melanogaster (Fruit fly).